The following is a 130-amino-acid chain: Small ribosomal subunit protein uS8 (130 aa).

The protein belongs to the universal ribosomal protein uS8 family. In terms of assembly, part of the 30S ribosomal subunit. Contacts proteins S5 and S12.

Its function is as follows. One of the primary rRNA binding proteins, it binds directly to 16S rRNA central domain where it helps coordinate assembly of the platform of the 30S subunit. This is Small ribosomal subunit protein uS8 from Pseudoalteromonas atlantica (strain T6c / ATCC BAA-1087).